The primary structure comprises 127 residues: Small ribosomal subunit protein uS13 (127 aa).

The segment at 95 to 127 (GLPVHGQRTSTNARTRKGPRRAAVKKKGGAKKK) is disordered. The span at 108–127 (RTRKGPRRAAVKKKGGAKKK) shows a compositional bias: basic residues.

The protein belongs to the universal ribosomal protein uS13 family. Part of the 30S ribosomal subunit. Forms a loose heterodimer with protein S19. Forms two bridges to the 50S subunit in the 70S ribosome.

Located at the top of the head of the 30S subunit, it contacts several helices of the 16S rRNA. In the 70S ribosome it contacts the 23S rRNA (bridge B1a) and protein L5 of the 50S subunit (bridge B1b), connecting the 2 subunits; these bridges are implicated in subunit movement. Contacts the tRNAs in the A and P-sites. The polypeptide is Small ribosomal subunit protein uS13 (Desulfatibacillum aliphaticivorans).